Reading from the N-terminus, the 806-residue chain is Glycerol-3-phosphate acyltransferase (806 aa).

The HXXXXD motif signature appears at 305 to 310 (CHRSHM).

Belongs to the GPAT/DAPAT family.

The protein resides in the cell inner membrane. It catalyses the reaction sn-glycerol 3-phosphate + an acyl-CoA = a 1-acyl-sn-glycero-3-phosphate + CoA. It functions in the pathway phospholipid metabolism; CDP-diacylglycerol biosynthesis; CDP-diacylglycerol from sn-glycerol 3-phosphate: step 1/3. This Enterobacter sp. (strain 638) protein is Glycerol-3-phosphate acyltransferase.